The chain runs to 304 residues: tRNA pseudouridine synthase B (304 aa).

The active-site Nucleophile is D38.

Belongs to the pseudouridine synthase TruB family. Type 1 subfamily.

The catalysed reaction is uridine(55) in tRNA = pseudouridine(55) in tRNA. In terms of biological role, responsible for synthesis of pseudouridine from uracil-55 in the psi GC loop of transfer RNAs. The chain is tRNA pseudouridine synthase B from Listeria welshimeri serovar 6b (strain ATCC 35897 / DSM 20650 / CCUG 15529 / CIP 8149 / NCTC 11857 / SLCC 5334 / V8).